Here is a 260-residue protein sequence, read N- to C-terminus: Alpha-acetolactate decarboxylase (260 aa).

The protein belongs to the alpha-acetolactate decarboxylase family.

The catalysed reaction is (2S)-2-acetolactate + H(+) = (R)-acetoin + CO2. It functions in the pathway polyol metabolism; (R,R)-butane-2,3-diol biosynthesis; (R,R)-butane-2,3-diol from pyruvate: step 2/3. Converts acetolactate into acetoin. In Methylococcus capsulatus (strain ATCC 33009 / NCIMB 11132 / Bath), this protein is Alpha-acetolactate decarboxylase (budA).